We begin with the raw amino-acid sequence, 1537 residues long: Dicer-like protein 1 (1537 aa).

A disordered region spans residues 38-68 (SDPAESSVDVQDEHSSDDSDNENEVFPKQND). In terms of domain architecture, Helicase ATP-binding spans 133 to 314 (LFERAKTQNT…EAATRLETFL (182 aa)). ATP is bound at residue 146–153 (LDTGSGKT). The short motif at 259 to 262 (DEAH) is the DEAH box element. One can recognise a Helicase C-terminal domain in the interval 459–618 (ELSKHFNDTT…EILPEDRILH (160 aa)). In terms of domain architecture, Dicer dsRNA-binding fold spans 651–741 (AIAILARYAS…NSIYHRRLPA (91 aa)). One can recognise a PAZ domain in the interval 891–1019 (DTVSFVHNND…ICAEPLRISA (129 aa)). 2 RNase III domains span residues 1043-1202 (IALE…LSGG) and 1253-1405 (ARHV…VDSK). Mg(2+) is bound by residues Glu-1294, Asp-1391, and Glu-1394. Positions 1439-1507 (TFLHNKLTNE…SEKALAVLDG (69 aa)) constitute a DRBM domain. Zn(2+) is bound by residues Cys-1451, His-1478, Cys-1519, and Cys-1521.

Belongs to the helicase family. Dicer subfamily. It depends on Mg(2+) as a cofactor. Requires Mn(2+) as cofactor.

In terms of biological role, dicer-like endonuclease involved in cleaving double-stranded RNA in the RNA interference (RNAi) pathway. Produces 21 to 25 bp dsRNAs (siRNAs) which target the selective destruction of homologous RNAs leading to sequence-specific suppression of gene expression, called post-transcriptional gene silencing (PTGS). Part of a broad host defense response against viral infection and transposons. The sequence is that of Dicer-like protein 1 (dcl1) from Aspergillus fumigatus (strain ATCC MYA-4609 / CBS 101355 / FGSC A1100 / Af293) (Neosartorya fumigata).